The sequence spans 433 residues: Shufflon protein C' (433 aa).

Residues 1–361 (MKKYDRGWAS…TGAILSCQSG (361 aa)) are constant region. Positions 362 to 433 (RWSGGNKINY…HVDAYCCPFN (72 aa)) are variable region.

This chain is Shufflon protein C', found in Escherichia coli.